Consider the following 1011-residue polypeptide: CRM-domain containing factor CFM2, chloroplastic (1011 aa).

The transit peptide at 1–45 directs the protein to the chloroplast; that stretch reads MLLPLFHQQPLILAKTFPDRIFPPFLVPNTLVSRRNVSRANSGIF. Positions 77-90 are enriched in basic and acidic residues; the sequence is HDSPTRRITGEESG. The tract at residues 77–96 is disordered; the sequence is HDSPTRRITGEESGKNSPGE. 3 CRM domains span residues 164–260, 376–473, and 577–677; these read LTLP…YFVS, PKLT…AVSS, and EGIT…QCLR. Disordered stretches follow at residues 721–810 and 841–872; these read DSAT…GNSL and LNANRKLPGSSTGSGSQISALRERKSENDGLV. A compositionally biased stretch (polar residues) spans 722 to 736; that stretch reads SATNETWSDGESSNM. The segment covering 743-757 has biased composition (basic and acidic residues); it reads ENQHTEPEKAREKIE. Residues 762–771 are compositionally biased toward polar residues; that stretch reads SDLSVPSSGE. A compositionally biased stretch (acidic residues) spans 772-782; that stretch reads ENWEDDSEGEV. Positions 849 to 859 are enriched in polar residues; it reads GSSTGSGSQIS. One can recognise a CRM 4 domain in the interval 873 to 972; that stretch reads TDLSNRERLI…WGAEEEMKSF (100 aa).

Interacts with RNA. Part of large ribonucleo-protein particles that contain CAF1 and/or CAF2.

The protein resides in the plastid. The protein localises to the chloroplast stroma. Binds specific group II introns in chloroplasts and facilitates their splicing. Acts on both subgroup IIA and subgroup IIB introns. The substrates of the subgroup IIB also require the CRM domain proteins CAF1 or CAF2, with a simultaneous binding of CFM2 and CAF1 or CAF2. Can bind to and promote the splicing of the single group I intron in chloroplast tRNA transcript of trnL-UAA gene. The sequence is that of CRM-domain containing factor CFM2, chloroplastic from Arabidopsis thaliana (Mouse-ear cress).